The primary structure comprises 45 residues: Large ribosomal subunit protein bL34 (45 aa).

Residues 1 to 10 show a composition bias toward polar residues; it reads MTQRTLGGTN. The interval 1–45 is disordered; that stretch reads MTQRTLGGTNRKQKRTSGFRARMRTHNGRKVIQARRSKGRHRLAV. Positions 11–45 are enriched in basic residues; the sequence is RKQKRTSGFRARMRTHNGRKVIQARRSKGRHRLAV.

The protein belongs to the bacterial ribosomal protein bL34 family.

The protein is Large ribosomal subunit protein bL34 (rpmH) of Synechocystis sp. (strain ATCC 27184 / PCC 6803 / Kazusa).